The primary structure comprises 476 residues: Methylenetetrahydrofolate--tRNA-(uracil-5-)-methyltransferase TrmFO (476 aa).

14-19 (GGGLAG) serves as a coordination point for FAD.

Belongs to the MnmG family. TrmFO subfamily. Requires FAD as cofactor.

It is found in the cytoplasm. It carries out the reaction uridine(54) in tRNA + (6R)-5,10-methylene-5,6,7,8-tetrahydrofolate + NADH + H(+) = 5-methyluridine(54) in tRNA + (6S)-5,6,7,8-tetrahydrofolate + NAD(+). The catalysed reaction is uridine(54) in tRNA + (6R)-5,10-methylene-5,6,7,8-tetrahydrofolate + NADPH + H(+) = 5-methyluridine(54) in tRNA + (6S)-5,6,7,8-tetrahydrofolate + NADP(+). Functionally, catalyzes the folate-dependent formation of 5-methyl-uridine at position 54 (M-5-U54) in all tRNAs. The chain is Methylenetetrahydrofolate--tRNA-(uracil-5-)-methyltransferase TrmFO from Brucella anthropi (strain ATCC 49188 / DSM 6882 / CCUG 24695 / JCM 21032 / LMG 3331 / NBRC 15819 / NCTC 12168 / Alc 37) (Ochrobactrum anthropi).